Consider the following 101-residue polypeptide: Feather keratin Cos2-2 (101 aa).

At S2 the chain carries N-acetylserine.

The protein belongs to the avian keratin family. The avian keratins (F-ker, S-ker, C-ker and B-ker) are a complex mixture of very similar polypeptides.

The sequence is that of Feather keratin Cos2-2 from Columba livia (Rock dove).